A 283-amino-acid chain; its full sequence is MQHNLIAFLSDVGSADEAHALCKGVMYGVAPAATIVDITHDVAPFDVREGALFLADVPHSFPAHTVICAYVYPETGTATHTIAVRNEKGQLLVGPNNGLLSFALDASPAVECHEVLSPDVMNQPVTPTWYGKDIVAACAAHLAAGTDLAAVGPRIDPKQIVRLPYASASEVEGGIRGEVVRIDRAFGNVWTNIPTHLIGSMLQDGERLEVKIEALSDTVLELPFCKTFGEVDEGQPLLYLNSRGRLALGLNQSNFIEKWPVVPGDSITVSPRVPDSNLGPVLG.

Substrate contacts are provided by residues Asp-11, 70-72, and 128-131; these read YVY and TWYG. Gly-131 provides a ligand contact to chloride.

The protein belongs to the SAM hydrolase / SAM-dependent halogenase family. As to quaternary structure, homotrimer.

It catalyses the reaction chloride + S-adenosyl-L-methionine = 5'-chloro-5'-deoxyadenosine + L-methionine. Involved in the biosynthesis of the proteosome inhibitor salinosporamide A (SalA). Catalyzes the halogenation of S-adenosyl-L-methionine (SAM) with chloride to generate 5'-chloro-5'-deoxyadenosine (5'-CIDA) and L-methionine. It can also use bromide and iodide, producing halogenated 5'-deoxyadenosine (5'-XDA) and L-methionine, however no halogenase activity is detected in the presence of fluoride. This chain is Adenosyl-chloride synthase, found in Salinispora tropica (strain ATCC BAA-916 / DSM 44818 / JCM 13857 / NBRC 105044 / CNB-440).